Reading from the N-terminus, the 298-residue chain is Glycine--tRNA ligase alpha subunit (298 aa).

Belongs to the class-II aminoacyl-tRNA synthetase family. Tetramer of two alpha and two beta subunits.

It localises to the cytoplasm. The catalysed reaction is tRNA(Gly) + glycine + ATP = glycyl-tRNA(Gly) + AMP + diphosphate. In Helicobacter acinonychis (strain Sheeba), this protein is Glycine--tRNA ligase alpha subunit.